A 177-amino-acid polypeptide reads, in one-letter code: MSVMFKLPLNLRQELKKPLGELIKGEIPIPYLKLKEIVNSNTLITVGDVVTENSLKVGLRPRLAIYDHKTERREYKPEIGDKGVLLTVKNPPGTITLHLLKTIKKAYSLIRRGTNVHIVVNGEEDLAAIPAVLYAPLGSFVVYGQPREGIVLIKVTSECKRRCAEIMRNMEVVRNGD.

GTP contacts are provided by aspartate 48, valine 49, valine 50, aspartate 67, lysine 69, and glutamate 124.

This sequence belongs to the GTP-dependent DPCK family.

The catalysed reaction is 3'-dephospho-CoA + GTP = GDP + CoA + H(+). Its pathway is cofactor biosynthesis; coenzyme A biosynthesis. Its function is as follows. Catalyzes the GTP-dependent phosphorylation of the 3'-hydroxyl group of dephosphocoenzyme A to form coenzyme A (CoA). This Pyrococcus furiosus (strain ATCC 43587 / DSM 3638 / JCM 8422 / Vc1) protein is GTP-dependent dephospho-CoA kinase.